Here is a 294-residue protein sequence, read N- to C-terminus: Type I ribosome-inactivating protein trichoanguina (294 aa).

The first 19 residues, 1–19, serve as a signal peptide directing secretion; that stretch reads MALSFFFLAISLGSPTAIG. Asn70 carries an N-linked (GlcNAc...) asparagine glycan. Residues Glu177 and Arg180 contribute to the active site. Asn220 carries N-linked (GlcNAc...) asparagine glycosylation. The propeptide occupies 265–294; it reads VGSEYDIPTTILHPGAMGMLHNQNGNYVTM.

This sequence belongs to the ribosome-inactivating protein family. Type 1 RIP subfamily.

The catalysed reaction is Endohydrolysis of the N-glycosidic bond at one specific adenosine on the 28S rRNA.. Its function is as follows. Inhibits protein synthesis by depurinating 28S rRNA in ribosomes. This Trichosanthes anguina (Snake gourd) protein is Type I ribosome-inactivating protein trichoanguina (TCA).